The chain runs to 603 residues: Sulfoacetaldehyde acetyltransferase (603 aa).

This sequence belongs to the TPP enzyme family. Homodimer or homotetramer. Mg(2+) serves as cofactor. Requires thiamine diphosphate as cofactor.

Its subcellular location is the cytoplasm. It carries out the reaction acetyl phosphate + sulfite + H(+) = sulfoacetaldehyde + phosphate. It participates in organosulfur degradation; taurine degradation via aerobic pathway; acetyl phosphate and sulfite from taurine: step 2/2. The sequence is that of Sulfoacetaldehyde acetyltransferase (xsc) from Alcaligenes xylosoxydans xylosoxydans (Achromobacter xylosoxidans).